We begin with the raw amino-acid sequence, 351 residues long: MRKIIHIDMDCFYAAIEMRDDPSLRHIPIAVGGNADRRGVISTANYPARRFGVRSAMSTAMALKLCPQLKVLPGRMALYREVSRHIHQILSRYTEWIEPLSLDEAYLNVTDSHHCYGSATLIAQEIRQSIFDELQLTASAGIAPVKFLAKIASDINKPNGQYVIPPDRVADFIKVLPLRKIPGVGKVMVQRLANMGLETCSDVQKYDVIVLVKQLGKFGQVLWDRCHGIDERLVNPDRLRKSIGVERTLARDIHQWEQCTELIESLYLELEKRLSNVKPDLRIARQGIKLKFDDFQLTTQEHVHPLLDKQDLLQLAQKTWTSRREGRGVRLVGLHVTLQDPEIERQLLLEW.

The UmuC domain maps to 4–185 (IIHIDMDCFY…LPLRKIPGVG (182 aa)). The Mg(2+) site is built by Asp8 and Asp103. Glu104 is a catalytic residue.

It belongs to the DNA polymerase type-Y family. In terms of assembly, monomer. The cofactor is Mg(2+).

It is found in the cytoplasm. The enzyme catalyses DNA(n) + a 2'-deoxyribonucleoside 5'-triphosphate = DNA(n+1) + diphosphate. Poorly processive, error-prone DNA polymerase involved in untargeted mutagenesis. Copies undamaged DNA at stalled replication forks, which arise in vivo from mismatched or misaligned primer ends. These misaligned primers can be extended by PolIV. Exhibits no 3'-5' exonuclease (proofreading) activity. May be involved in translesional synthesis, in conjunction with the beta clamp from PolIII. This is DNA polymerase IV from Photorhabdus laumondii subsp. laumondii (strain DSM 15139 / CIP 105565 / TT01) (Photorhabdus luminescens subsp. laumondii).